The primary structure comprises 678 residues: THO complex subunit 5 homolog A (678 aa).

Disordered regions lie at residues 1-35 and 294-329; these read MASD…YSEE and ALFK…VQLD. Positions 7-10 match the Nuclear localization signal motif; sequence KKRK. A compositionally biased stretch (basic and acidic residues) spans 14–35; it reads NRNEDVKRGRHEDQEGRYYSEE. Acidic residues predominate over residues 301–314; sequence DSQDDESDSDAEEE.

It belongs to the THOC5 family. As to quaternary structure, component of the THO subcomplex, which is composed of thoc1, thoc2, thoc3, thoc5, thoc6 and thoc7. Component of the transcription/export (TREX) complex at least composed of alyref/thoc4, ddx39b, sarnp/cip29, chtop and the THO subcomplex. Interacts with thoc7.

Its subcellular location is the nucleus. It localises to the nucleus speckle. The protein localises to the cytoplasm. Functionally, component of the THO subcomplex of the TREX complex which is thought to couple mRNA transcription, processing and nuclear export, and which specifically associates with spliced mRNA and not with unspliced pre-mRNA. Plays a key structural role in the oligomerization of the THO-ddx39b complex. TREX is recruited to spliced mRNAs by a transcription-independent mechanism, binds to mRNA upstream of the exon-junction complex (EJC) and is recruited in a splicing- and cap-dependent manner to a region near the 5' end of the mRNA where it functions in mRNA export to the cytoplasm via the TAP/NXF1 pathway. May be involved in cell differentiation. This Xenopus laevis (African clawed frog) protein is THO complex subunit 5 homolog A (thoc5-a).